A 104-amino-acid polypeptide reads, in one-letter code: Large ribosomal subunit protein uL24 (104 aa).

This sequence belongs to the universal ribosomal protein uL24 family. As to quaternary structure, part of the 50S ribosomal subunit.

One of two assembly initiator proteins, it binds directly to the 5'-end of the 23S rRNA, where it nucleates assembly of the 50S subunit. Functionally, one of the proteins that surrounds the polypeptide exit tunnel on the outside of the subunit. The sequence is that of Large ribosomal subunit protein uL24 from Caulobacter vibrioides (strain ATCC 19089 / CIP 103742 / CB 15) (Caulobacter crescentus).